The sequence spans 81 residues: ATP synthase subunit c, chloroplastic (81 aa).

Transmembrane regions (helical) follow at residues proline 3–glycine 23 and leucine 57–alanine 77.

It belongs to the ATPase C chain family. F-type ATPases have 2 components, F(1) - the catalytic core - and F(0) - the membrane proton channel. F(1) has five subunits: alpha(3), beta(3), gamma(1), delta(1), epsilon(1). F(0) has four main subunits: a(1), b(1), b'(1) and c(10-14). The alpha and beta chains form an alternating ring which encloses part of the gamma chain. F(1) is attached to F(0) by a central stalk formed by the gamma and epsilon chains, while a peripheral stalk is formed by the delta, b and b' chains.

It localises to the plastid. The protein localises to the chloroplast thylakoid membrane. In terms of biological role, f(1)F(0) ATP synthase produces ATP from ADP in the presence of a proton or sodium gradient. F-type ATPases consist of two structural domains, F(1) containing the extramembraneous catalytic core and F(0) containing the membrane proton channel, linked together by a central stalk and a peripheral stalk. During catalysis, ATP synthesis in the catalytic domain of F(1) is coupled via a rotary mechanism of the central stalk subunits to proton translocation. Key component of the F(0) channel; it plays a direct role in translocation across the membrane. A homomeric c-ring of between 10-14 subunits forms the central stalk rotor element with the F(1) delta and epsilon subunits. This chain is ATP synthase subunit c, chloroplastic, found in Euglena gracilis.